Here is a 611-residue protein sequence, read N- to C-terminus: MPPYRSRTTTHGRNMAGARGLWRATGMKDEDFGKPIIAVVNSFTQFVPGHVHLKDLGQLVAREIESAGGVAKEFNTIAVDDGIAMGHDGMLYSLPSRELIADSVEYMVNAHCADAMVCISNCDKITPGMLMAALRLNIPVVFVSGGPMEAGKVVWEDSVKKLDLVDAMVAAADDHYTDEQVKAIERSACPTCGSCSGMFTANSMNCLTEALGLSLPGNGSTLATHADRKRLFVEAGHLIVDLARRYYEQDDESVLPRSIATFSAFENAMTLDIAMGGSTNTVLHLLAAAQEAEIDFTMADIDRLSRRVPVLCKVAPAVSSVHMEDVHHAGGIMGILGQLDNAGLLTTSIPTVHSETLAKALDHWDVTRTNSEMVHKFYSAAPGGVPTQVAFSQERRFDKVDTDREKGVIRSKEHAFSQDGGLAVLYGNLAEDGCIVKTAGVDDSILKFSGPARIFESQDSAVLGILNGKIKPGDIVLIRYEGPRGGPGMQEMLYPTSYLKSKGLGKACALITDGRFSGGSSGLSIGHVSPEAAEGGTIGLVREGDIIDIDIPNRKIHLAVDDATVAERRAEQDAAGWKPAEERKRKISTALKAYAAMATSAARGAVRKLPD.

A Mg(2+)-binding site is contributed by Asp-81. Cys-122 is a binding site for [2Fe-2S] cluster. Mg(2+) is bound by residues Asp-123 and Lys-124. Lys-124 carries the post-translational modification N6-carboxylysine. Cys-195 serves as a coordination point for [2Fe-2S] cluster. Glu-491 contributes to the Mg(2+) binding site. Ser-517 serves as the catalytic Proton acceptor.

It belongs to the IlvD/Edd family. As to quaternary structure, homodimer. [2Fe-2S] cluster serves as cofactor. The cofactor is Mg(2+).

It carries out the reaction (2R)-2,3-dihydroxy-3-methylbutanoate = 3-methyl-2-oxobutanoate + H2O. The enzyme catalyses (2R,3R)-2,3-dihydroxy-3-methylpentanoate = (S)-3-methyl-2-oxopentanoate + H2O. It participates in amino-acid biosynthesis; L-isoleucine biosynthesis; L-isoleucine from 2-oxobutanoate: step 3/4. The protein operates within amino-acid biosynthesis; L-valine biosynthesis; L-valine from pyruvate: step 3/4. Functions in the biosynthesis of branched-chain amino acids. Catalyzes the dehydration of (2R,3R)-2,3-dihydroxy-3-methylpentanoate (2,3-dihydroxy-3-methylvalerate) into 2-oxo-3-methylpentanoate (2-oxo-3-methylvalerate) and of (2R)-2,3-dihydroxy-3-methylbutanoate (2,3-dihydroxyisovalerate) into 2-oxo-3-methylbutanoate (2-oxoisovalerate), the penultimate precursor to L-isoleucine and L-valine, respectively. The chain is Dihydroxy-acid dehydratase from Brucella suis (strain ATCC 23445 / NCTC 10510).